The following is a 434-amino-acid chain: ATP-dependent protease ATPase subunit HslU (434 aa).

ATP-binding positions include Ile-18, 60-65 (GVGKTE), Asp-247, Glu-312, and Arg-384.

This sequence belongs to the ClpX chaperone family. HslU subfamily. In terms of assembly, a double ring-shaped homohexamer of HslV is capped on each side by a ring-shaped HslU homohexamer. The assembly of the HslU/HslV complex is dependent on binding of ATP.

The protein localises to the cytoplasm. ATPase subunit of a proteasome-like degradation complex; this subunit has chaperone activity. The binding of ATP and its subsequent hydrolysis by HslU are essential for unfolding of protein substrates subsequently hydrolyzed by HslV. HslU recognizes the N-terminal part of its protein substrates and unfolds these before they are guided to HslV for hydrolysis. This is ATP-dependent protease ATPase subunit HslU from Brucella suis (strain ATCC 23445 / NCTC 10510).